The sequence spans 259 residues: Ribonuclease HII (259 aa).

Positions 70–258 (TLIAGIDEVG…VKSLVLGKKE (189 aa)) constitute an RNase H type-2 domain. A divalent metal cation contacts are provided by D76, E77, and D168.

The protein belongs to the RNase HII family. Mn(2+) is required as a cofactor. The cofactor is Mg(2+).

Its subcellular location is the cytoplasm. The catalysed reaction is Endonucleolytic cleavage to 5'-phosphomonoester.. Functionally, endonuclease that specifically degrades the RNA of RNA-DNA hybrids. This chain is Ribonuclease HII, found in Streptococcus pneumoniae (strain P1031).